The primary structure comprises 211 residues: Protein-methionine-sulfoxide reductase heme-binding subunit MsrQ (211 aa).

A run of 5 helical transmembrane segments spans residues 17-37 (LAGL…GLGA), 82-102 (LWCF…ELGV), 116-136 (PYLT…FTST), 153-173 (FVYL…KIIS), and 178-198 (IYAG…LSLF).

It belongs to the MsrQ family. In terms of assembly, heterodimer of a catalytic subunit (MsrP) and a heme-binding subunit (MsrQ). The cofactor is FMN. Requires heme b as cofactor.

The protein localises to the cell inner membrane. Functionally, part of the MsrPQ system that repairs oxidized periplasmic proteins containing methionine sulfoxide residues (Met-O), using respiratory chain electrons. Thus protects these proteins from oxidative-stress damage caused by reactive species of oxygen and chlorine generated by the host defense mechanisms. MsrPQ is essential for the maintenance of envelope integrity under bleach stress, rescuing a wide series of structurally unrelated periplasmic proteins from methionine oxidation, including the primary periplasmic chaperone SurA and the lipoprotein Pal. MsrQ provides electrons for reduction to the reductase catalytic subunit MsrP, using the quinone pool of the respiratory chain. The sequence is that of Protein-methionine-sulfoxide reductase heme-binding subunit MsrQ from Shigella boydii serotype 4 (strain Sb227).